Reading from the N-terminus, the 250-residue chain is Small ribosomal subunit protein uS2 (250 aa).

It belongs to the universal ribosomal protein uS2 family.

This is Small ribosomal subunit protein uS2 from Variovorax paradoxus (strain S110).